We begin with the raw amino-acid sequence, 292 residues long: 31 kDa ribonucleoprotein, chloroplastic (292 aa).

In terms of domain architecture, RRM 1 spans 88–166 (LKLFVGNLPF…RAIRVNAGPA (79 aa)). Positions 165–203 (PAPAKRENSSFGGGRGGNSSYGGGRDGNSSFGGARGGRS) are disordered. The segment at 167–207 (PAKRENSSFGGGRGGNSSYGGGRDGNSSFGGARGGRSVDSS) is linker (Gly-rich). Positions 175–190 (FGGGRGGNSSYGGGRD) are enriched in gly residues. The RRM 2 domain maps to 208-286 (NRVYVGNLSW…RSIRVSAAEE (79 aa)).

Expressed at high levels in the leaves and seedlings, and lower levels are seen in the stems and roots.

The protein resides in the plastid. It localises to the chloroplast. The protein is 31 kDa ribonucleoprotein, chloroplastic of Nicotiana plumbaginifolia (Leadwort-leaved tobacco).